A 285-amino-acid chain; its full sequence is MTQIIDGKALAAKLQGQLAEKTAKLKEETALVPGLVVILVGDNPASQVYVRNKERSALAAGSRSEVVRVPETITQEELLDLIAKYNQDPAWHGILVQLPLPKHIDEEAVLLAIDPEKDVDGFHPLNMGRLWSGHPVMIPSTPAGIMEMFHEYGIDLEGKNAVVIGRSNIVGKPMAQLLLAKNATVTLTHSRTHNLAKVAAKADILVVAIGRAKFVTADFVKPGAVVIDVGMNRDENGKLCGDVDYEAVAPLASHITPVPGGVGPMTITMLMEQTYQAALRTLDRK.

Residues glycine 165–serine 167 and serine 190 contribute to the NADP(+) site.

This sequence belongs to the tetrahydrofolate dehydrogenase/cyclohydrolase family. As to quaternary structure, homodimer.

The enzyme catalyses (6R)-5,10-methylene-5,6,7,8-tetrahydrofolate + NADP(+) = (6R)-5,10-methenyltetrahydrofolate + NADPH. It catalyses the reaction (6R)-5,10-methenyltetrahydrofolate + H2O = (6R)-10-formyltetrahydrofolate + H(+). The protein operates within one-carbon metabolism; tetrahydrofolate interconversion. Its function is as follows. Catalyzes the oxidation of 5,10-methylenetetrahydrofolate to 5,10-methenyltetrahydrofolate and then the hydrolysis of 5,10-methenyltetrahydrofolate to 10-formyltetrahydrofolate. This is Bifunctional protein FolD from Streptococcus pneumoniae (strain ATCC BAA-255 / R6).